A 541-amino-acid chain; its full sequence is L-ornithine N(5)-monooxygenase (541 aa).

FAD is bound by residues 50–58 and Gln-69; that span reads EKQPEFQWH. Lys-74 is a substrate binding site. NADP(+) is bound at residue 223-226; the sequence is SGQS. Substrate is bound by residues 269–272 and Asn-300; that span reads NEIF. Residue 300-302 coordinates NADP(+); sequence NYS. Residues 430 to 474 form a disordered region; it reads TEIPKGPDGSLFDASEEEATWRPASPITPASPSPPSTPTSSALSQ. 520–522 lines the FAD pocket; the sequence is SLL. Residue Ser-523 coordinates substrate.

It belongs to the lysine N(6)-hydroxylase/L-ornithine N(5)-oxygenase family. As to quaternary structure, homotetramer. FAD is required as a cofactor.

The catalysed reaction is L-ornithine + NADPH + O2 = N(5)-hydroxy-L-ornithine + NADP(+) + H2O. It catalyses the reaction L-ornithine + NADH + O2 = N(5)-hydroxy-L-ornithine + NAD(+) + H2O. The protein operates within siderophore biosynthesis. In terms of biological role, L-ornithine N(5)-monooxygenase; part of the siderophore basidioferrin biosynthetic pathway. The biosynthesis of basidioferrin depends on the hydroxylation of ornithine to N(5)-hydroxyornithine, catalyzed by the monooxygenase SMO1. The second step, the acylation of N(5)-hydroxy-L-ornithine is catalyzed by a not yet identified N-acyltransferase. Finally, assembly of basidioferrin is catalyzed by the nonribosomal peptide synthase (NRPS) NPS2 via amide bond formation between three L-AHO molecules to release the linear L-AHO trimer. This chain is L-ornithine N(5)-monooxygenase (SMO1), found in Ceriporiopsis subvermispora (strain B) (White-rot fungus).